Here is a 401-residue protein sequence, read N- to C-terminus: Acetate kinase (401 aa).

Mg(2+) is bound at residue asparagine 7. Lysine 14 contributes to the ATP binding site. Residue arginine 96 coordinates substrate. Aspartate 153 acts as the Proton donor/acceptor in catalysis. ATP-binding positions include 212–216 (HLGNG), 287–289 (DMR), and 335–339 (GIGEN). Residue glutamate 388 participates in Mg(2+) binding.

Belongs to the acetokinase family. Homodimer. It depends on Mg(2+) as a cofactor. Requires Mn(2+) as cofactor.

Its subcellular location is the cytoplasm. The catalysed reaction is acetate + ATP = acetyl phosphate + ADP. It functions in the pathway metabolic intermediate biosynthesis; acetyl-CoA biosynthesis; acetyl-CoA from acetate: step 1/2. Its function is as follows. Catalyzes the formation of acetyl phosphate from acetate and ATP. Can also catalyze the reverse reaction. In Microcystis aeruginosa (strain NIES-843 / IAM M-2473), this protein is Acetate kinase.